Here is a 301-residue protein sequence, read N- to C-terminus: Homoserine kinase (301 aa).

81-91 (RPSSGLGSSAA) lines the ATP pocket.

It belongs to the GHMP kinase family. Homoserine kinase subfamily.

Its subcellular location is the cytoplasm. It carries out the reaction L-homoserine + ATP = O-phospho-L-homoserine + ADP + H(+). Its pathway is amino-acid biosynthesis; L-threonine biosynthesis; L-threonine from L-aspartate: step 4/5. In terms of biological role, catalyzes the ATP-dependent phosphorylation of L-homoserine to L-homoserine phosphate. The protein is Homoserine kinase of Halobacterium salinarum (strain ATCC 29341 / DSM 671 / R1).